The chain runs to 171 residues: uncharacterized protein (171 aa).

This is an uncharacterized protein from Caenorhabditis elegans.